The primary structure comprises 324 residues: Sex-lethal homolog (324 aa).

RRM domains follow at residues Thr102–Pro180 and Thr188–Glu268.

As to expression, expressed in somatic cells of both sexes throughout development, but not in the pole cells which are the progenitors of the germline.

It localises to the nucleus. Its function is as follows. Unknown; apparently not involved in somatic sex determination. The sequence is that of Sex-lethal homolog (SXL) from Musca domestica (House fly).